The primary structure comprises 833 residues: Leucine--tRNA ligase (833 aa).

Positions 41–52 (PYPSGAGLHVGH) match the 'HIGH' region motif. The short motif at 610-614 (KMSKS) is the 'KMSKS' region element. Lys-613 is a binding site for ATP.

The protein belongs to the class-I aminoacyl-tRNA synthetase family.

The protein resides in the cytoplasm. It carries out the reaction tRNA(Leu) + L-leucine + ATP = L-leucyl-tRNA(Leu) + AMP + diphosphate. The chain is Leucine--tRNA ligase from Streptococcus pneumoniae (strain Taiwan19F-14).